A 428-amino-acid chain; its full sequence is D-amino acid dehydrogenase (428 aa).

An FAD-binding site is contributed by 3-17; it reads VVVLGSGVVGVASAY.

The protein belongs to the DadA oxidoreductase family. Requires FAD as cofactor.

The catalysed reaction is a D-alpha-amino acid + A + H2O = a 2-oxocarboxylate + AH2 + NH4(+). It participates in amino-acid degradation; D-alanine degradation; NH(3) and pyruvate from D-alanine: step 1/1. Functionally, oxidative deamination of D-amino acids. The polypeptide is D-amino acid dehydrogenase (Burkholderia ambifaria (strain MC40-6)).